The chain runs to 215 residues: Peptide methionine sulfoxide reductase MsrA (215 aa).

Cys-57 is a catalytic residue.

The protein belongs to the MsrA Met sulfoxide reductase family.

It carries out the reaction L-methionyl-[protein] + [thioredoxin]-disulfide + H2O = L-methionyl-(S)-S-oxide-[protein] + [thioredoxin]-dithiol. It catalyses the reaction [thioredoxin]-disulfide + L-methionine + H2O = L-methionine (S)-S-oxide + [thioredoxin]-dithiol. Functionally, has an important function as a repair enzyme for proteins that have been inactivated by oxidation. Catalyzes the reversible oxidation-reduction of methionine sulfoxide in proteins to methionine. This chain is Peptide methionine sulfoxide reductase MsrA, found in Saccharophagus degradans (strain 2-40 / ATCC 43961 / DSM 17024).